Reading from the N-terminus, the 557-residue chain is CTP synthase (557 aa).

The amidoligase domain stretch occupies residues 1 to 270; that stretch reads MTKYVFVTGG…DAIICEELKL (270 aa). Position 13 (Ser13) interacts with CTP. A UTP-binding site is contributed by Ser13. Residues 14-19 and Asp71 contribute to the ATP site; that span reads SLGKGI. Asp71 and Glu144 together coordinate Mg(2+). Residues 151–153, 191–196, and Lys227 contribute to the CTP site; these read DIE and KTKPTQ. UTP contacts are provided by residues 191–196 and Lys227; that span reads KTKPTQ. The 253-residue stretch at 295–547 folds into the Glutamine amidotransferase type-1 domain; sequence TIGMVGKYVD…VEAALAHQQS (253 aa). L-glutamine is bound at residue Gly356. The Nucleophile; for glutamine hydrolysis role is filled by Cys383. L-glutamine-binding positions include 384-387, Glu407, and Arg473; that span reads LGMQ. Catalysis depends on residues His520 and Glu522.

This sequence belongs to the CTP synthase family. In terms of assembly, homotetramer.

It carries out the reaction UTP + L-glutamine + ATP + H2O = CTP + L-glutamate + ADP + phosphate + 2 H(+). The enzyme catalyses L-glutamine + H2O = L-glutamate + NH4(+). It catalyses the reaction UTP + NH4(+) + ATP = CTP + ADP + phosphate + 2 H(+). It functions in the pathway pyrimidine metabolism; CTP biosynthesis via de novo pathway; CTP from UDP: step 2/2. Its activity is regulated as follows. Allosterically activated by GTP, when glutamine is the substrate; GTP has no effect on the reaction when ammonia is the substrate. The allosteric effector GTP functions by stabilizing the protein conformation that binds the tetrahedral intermediate(s) formed during glutamine hydrolysis. Inhibited by the product CTP, via allosteric rather than competitive inhibition. Functionally, catalyzes the ATP-dependent amination of UTP to CTP with either L-glutamine or ammonia as the source of nitrogen. Regulates intracellular CTP levels through interactions with the four ribonucleotide triphosphates. This is CTP synthase from Paraburkholderia xenovorans (strain LB400).